The sequence spans 265 residues: NAD kinase 2 (265 aa).

Residue Asn51 is the Proton acceptor of the active site. NAD(+) is bound by residues 122–123 (NE), Arg149, Asp151, 162–167 (TAYNKS), Ala186, and Asn226.

This sequence belongs to the NAD kinase family. It depends on a divalent metal cation as a cofactor.

The protein localises to the cytoplasm. The catalysed reaction is NAD(+) + ATP = ADP + NADP(+) + H(+). Functionally, involved in the regulation of the intracellular balance of NAD and NADP, and is a key enzyme in the biosynthesis of NADP. Catalyzes specifically the phosphorylation on 2'-hydroxyl of the adenosine moiety of NAD to yield NADP. The sequence is that of NAD kinase 2 from Halalkalibacterium halodurans (strain ATCC BAA-125 / DSM 18197 / FERM 7344 / JCM 9153 / C-125) (Bacillus halodurans).